A 108-amino-acid polypeptide reads, in one-letter code: ATP-dependent Clp protease adapter protein ClpS (108 aa).

It belongs to the ClpS family. Binds to the N-terminal domain of the chaperone ClpA.

Its function is as follows. Involved in the modulation of the specificity of the ClpAP-mediated ATP-dependent protein degradation. This chain is ATP-dependent Clp protease adapter protein ClpS, found in Mycobacterium leprae (strain TN).